The chain runs to 733 residues: Cell division cycle protein 48 homolog AF_1297 (733 aa).

ATP-binding positions include 223-230 (GPPGTGKT) and 496-503 (GPPGTGKT).

Belongs to the AAA ATPase family. CDC48 subfamily.

The polypeptide is Cell division cycle protein 48 homolog AF_1297 (Archaeoglobus fulgidus (strain ATCC 49558 / DSM 4304 / JCM 9628 / NBRC 100126 / VC-16)).